We begin with the raw amino-acid sequence, 355 residues long: Glycerol-3-phosphate dehydrogenase [NAD(P)+] (355 aa).

NADPH is bound by residues Ser-14, Trp-15, Arg-35, and Lys-117. Sn-glycerol 3-phosphate-binding residues include Lys-117, Gly-147, and Ser-149. Position 151 (Ala-151) interacts with NADPH. Residues Lys-202, Asp-255, Ser-265, Arg-266, and Asn-267 each coordinate sn-glycerol 3-phosphate. Lys-202 acts as the Proton acceptor in catalysis. Arg-266 provides a ligand contact to NADPH. NADPH contacts are provided by Ile-290 and Glu-292.

This sequence belongs to the NAD-dependent glycerol-3-phosphate dehydrogenase family.

It localises to the cytoplasm. The catalysed reaction is sn-glycerol 3-phosphate + NAD(+) = dihydroxyacetone phosphate + NADH + H(+). It catalyses the reaction sn-glycerol 3-phosphate + NADP(+) = dihydroxyacetone phosphate + NADPH + H(+). The protein operates within membrane lipid metabolism; glycerophospholipid metabolism. Catalyzes the reduction of the glycolytic intermediate dihydroxyacetone phosphate (DHAP) to sn-glycerol 3-phosphate (G3P), the key precursor for phospholipid synthesis. The polypeptide is Glycerol-3-phosphate dehydrogenase [NAD(P)+] (Lawsonia intracellularis (strain PHE/MN1-00)).